The primary structure comprises 429 residues: Adenylosuccinate synthetase (429 aa).

Residues 12 to 18 and 40 to 42 each bind GTP; these read GDEGKGK and GHT. The Proton acceptor role is filled by aspartate 13. Aspartate 13 and glycine 40 together coordinate Mg(2+). Residues 13-16, 38-41, threonine 128, arginine 142, glutamine 223, threonine 238, and arginine 302 contribute to the IMP site; these read DEGK and NAGH. The Proton donor role is filled by histidine 41. 298 to 304 contributes to the substrate binding site; it reads VNTGRPR. Residues arginine 304, 330–332, and 412–414 each bind GTP; these read KLD and GVG.

This sequence belongs to the adenylosuccinate synthetase family. In terms of assembly, homodimer. The cofactor is Mg(2+).

It localises to the cytoplasm. It carries out the reaction IMP + L-aspartate + GTP = N(6)-(1,2-dicarboxyethyl)-AMP + GDP + phosphate + 2 H(+). It functions in the pathway purine metabolism; AMP biosynthesis via de novo pathway; AMP from IMP: step 1/2. Functionally, plays an important role in the de novo pathway of purine nucleotide biosynthesis. Catalyzes the first committed step in the biosynthesis of AMP from IMP. This is Adenylosuccinate synthetase from Arthrobacter sp. (strain FB24).